A 141-amino-acid chain; its full sequence is Ribonuclease P protein component (141 aa).

Basic and acidic residues predominate over residues 114–134 (RRIKAKGERRGDGKRRTERPE). Residues 114–141 (RRIKAKGERRGDGKRRTERPESGPVNGK) form a disordered region.

It belongs to the RnpA family. In terms of assembly, consists of a catalytic RNA component (M1 or rnpB) and a protein subunit.

It carries out the reaction Endonucleolytic cleavage of RNA, removing 5'-extranucleotides from tRNA precursor.. RNaseP catalyzes the removal of the 5'-leader sequence from pre-tRNA to produce the mature 5'-terminus. It can also cleave other RNA substrates such as 4.5S RNA. The protein component plays an auxiliary but essential role in vivo by binding to the 5'-leader sequence and broadening the substrate specificity of the ribozyme. In Brucella anthropi (strain ATCC 49188 / DSM 6882 / CCUG 24695 / JCM 21032 / LMG 3331 / NBRC 15819 / NCTC 12168 / Alc 37) (Ochrobactrum anthropi), this protein is Ribonuclease P protein component.